Consider the following 309-residue polypeptide: Ribose-phosphate pyrophosphokinase (309 aa).

ATP-binding positions include 37-39 (DGE) and 96-97 (RQ). Mg(2+)-binding residues include H130 and D169. K192 is an active-site residue. D-ribose 5-phosphate contacts are provided by residues R194, D218, and 222-226 (DTAGT).

Belongs to the ribose-phosphate pyrophosphokinase family. Class I subfamily. In terms of assembly, homohexamer. The cofactor is Mg(2+).

The protein resides in the cytoplasm. It carries out the reaction D-ribose 5-phosphate + ATP = 5-phospho-alpha-D-ribose 1-diphosphate + AMP + H(+). Its pathway is metabolic intermediate biosynthesis; 5-phospho-alpha-D-ribose 1-diphosphate biosynthesis; 5-phospho-alpha-D-ribose 1-diphosphate from D-ribose 5-phosphate (route I): step 1/1. Functionally, involved in the biosynthesis of the central metabolite phospho-alpha-D-ribosyl-1-pyrophosphate (PRPP) via the transfer of pyrophosphoryl group from ATP to 1-hydroxyl of ribose-5-phosphate (Rib-5-P). This chain is Ribose-phosphate pyrophosphokinase, found in Wolinella succinogenes (strain ATCC 29543 / DSM 1740 / CCUG 13145 / JCM 31913 / LMG 7466 / NCTC 11488 / FDC 602W) (Vibrio succinogenes).